The chain runs to 361 residues: S-adenosylmethionine:tRNA ribosyltransferase-isomerase (361 aa).

The protein belongs to the QueA family. As to quaternary structure, monomer.

Its subcellular location is the cytoplasm. The catalysed reaction is 7-aminomethyl-7-carbaguanosine(34) in tRNA + S-adenosyl-L-methionine = epoxyqueuosine(34) in tRNA + adenine + L-methionine + 2 H(+). It functions in the pathway tRNA modification; tRNA-queuosine biosynthesis. Functionally, transfers and isomerizes the ribose moiety from AdoMet to the 7-aminomethyl group of 7-deazaguanine (preQ1-tRNA) to give epoxyqueuosine (oQ-tRNA). This Actinobacillus pleuropneumoniae serotype 3 (strain JL03) protein is S-adenosylmethionine:tRNA ribosyltransferase-isomerase.